Reading from the N-terminus, the 97-residue chain is UPF0235 protein APL_1380 (97 aa).

This sequence belongs to the UPF0235 family.

This chain is UPF0235 protein APL_1380, found in Actinobacillus pleuropneumoniae serotype 5b (strain L20).